Here is a 359-residue protein sequence, read N- to C-terminus: Tropomodulin-1 (359 aa).

Residues Pro39–Pro61 form a disordered region. The tract at residues Pro39–His138 is tropomyosin-binding.

Belongs to the tropomodulin family. In terms of assembly, binds to the N-terminus of tropomyosin and to actin. Interacts with FLII.

The protein resides in the cytoplasm. It is found in the cytoskeleton. In terms of biological role, blocks the elongation and depolymerization of the actin filaments at the pointed end. The Tmod/TM complex contributes to the formation of the short actin protofilament, which in turn defines the geometry of the membrane skeleton. May play an important role in regulating the organization of actin filaments by preferentially binding to a specific tropomyosin isoform at its N-terminus. In Bos taurus (Bovine), this protein is Tropomodulin-1 (TMOD1).